A 263-amino-acid chain; its full sequence is Tryptophan synthase alpha chain (263 aa).

Catalysis depends on proton acceptor residues glutamate 49 and aspartate 60.

This sequence belongs to the TrpA family. Tetramer of two alpha and two beta chains.

It carries out the reaction (1S,2R)-1-C-(indol-3-yl)glycerol 3-phosphate + L-serine = D-glyceraldehyde 3-phosphate + L-tryptophan + H2O. Its pathway is amino-acid biosynthesis; L-tryptophan biosynthesis; L-tryptophan from chorismate: step 5/5. Its function is as follows. The alpha subunit is responsible for the aldol cleavage of indoleglycerol phosphate to indole and glyceraldehyde 3-phosphate. In Clostridium kluyveri (strain NBRC 12016), this protein is Tryptophan synthase alpha chain.